Consider the following 243-residue polypeptide: 1-(5-phosphoribosyl)-5-[(5-phosphoribosylamino)methylideneamino] imidazole-4-carboxamide isomerase (243 aa).

D8 serves as the catalytic Proton acceptor. D129 acts as the Proton donor in catalysis.

This sequence belongs to the HisA/HisF family.

It localises to the cytoplasm. The catalysed reaction is 1-(5-phospho-beta-D-ribosyl)-5-[(5-phospho-beta-D-ribosylamino)methylideneamino]imidazole-4-carboxamide = 5-[(5-phospho-1-deoxy-D-ribulos-1-ylimino)methylamino]-1-(5-phospho-beta-D-ribosyl)imidazole-4-carboxamide. It functions in the pathway amino-acid biosynthesis; L-histidine biosynthesis; L-histidine from 5-phospho-alpha-D-ribose 1-diphosphate: step 4/9. This chain is 1-(5-phosphoribosyl)-5-[(5-phosphoribosylamino)methylideneamino] imidazole-4-carboxamide isomerase, found in Moorella thermoacetica (strain ATCC 39073 / JCM 9320).